A 140-amino-acid chain; its full sequence is Large ribosomal subunit protein uL14 (140 aa).

It belongs to the universal ribosomal protein uL14 family.

The polypeptide is Large ribosomal subunit protein uL14 (RpL23-A) (Aedes aegypti (Yellowfever mosquito)).